Reading from the N-terminus, the 902-residue chain is Calcium-activated chloride channel regulator 3A-1 (902 aa).

An N-terminal signal peptide occupies residues 1–21 (MVPGLQVLLFLTLHLLQNTES). The metalloprotease domain stretch occupies residues 45–199 (DERLIPSIKE…RITGTNVVHN (155 aa)). N-linked (GlcNAc...) asparagine glycosylation is present at N75. A Zn(2+)-binding site is contributed by H155. Residue E156 is part of the active site. Residues H159 and D166 each contribute to the Zn(2+) site. The region spanning 308–476 (VVCLVLDKSG…NSLIDAFSRI (169 aa)) is the VWFA domain. N504, N515, N630, N687, N697, N809, and N814 each carry an N-linked (GlcNAc...) asparagine glycan.

This sequence belongs to the CLCR family. As to quaternary structure, part of a complex composed of complement component C3, CLCA1/CLCA3, A2ML1/OH and ALB/serum albumin. In terms of processing, glycosylated. Post-translationally, the 130-kDa product is autoproteolytically processed by the metalloprotease domain and yields two subunits, a 90-kDa protein and a group of 32- to 38-kDa proteins. The cleavage is necessary for calcium-activated chloride channel (CaCC) activation activity. Highly expressed in skin and spleen, and at lower levels in kidney and liver. Also detected in lung and brain. Not detected in lung or brain. In lung, localizes to respiratory epithelia of the bronchi and trachea and the submucosal glands.

The protein localises to the cell membrane. Its function is as follows. Plays a role in modulating chloride current across the plasma membrane in a calcium-dependent manner. The protein is Calcium-activated chloride channel regulator 3A-1 of Mus musculus (Mouse).